The primary structure comprises 321 residues: Lipoyl synthase (321 aa).

[4Fe-4S] cluster is bound by residues C68, C73, C79, C94, C98, C101, and S308. The 218-residue stretch at 80 to 297 (FNHGTATFMI…KALADELGFT (218 aa)) folds into the Radical SAM core domain.

This sequence belongs to the radical SAM superfamily. Lipoyl synthase family. It depends on [4Fe-4S] cluster as a cofactor.

Its subcellular location is the cytoplasm. The enzyme catalyses [[Fe-S] cluster scaffold protein carrying a second [4Fe-4S](2+) cluster] + N(6)-octanoyl-L-lysyl-[protein] + 2 oxidized [2Fe-2S]-[ferredoxin] + 2 S-adenosyl-L-methionine + 4 H(+) = [[Fe-S] cluster scaffold protein] + N(6)-[(R)-dihydrolipoyl]-L-lysyl-[protein] + 4 Fe(3+) + 2 hydrogen sulfide + 2 5'-deoxyadenosine + 2 L-methionine + 2 reduced [2Fe-2S]-[ferredoxin]. It participates in protein modification; protein lipoylation via endogenous pathway; protein N(6)-(lipoyl)lysine from octanoyl-[acyl-carrier-protein]: step 2/2. Functionally, catalyzes the radical-mediated insertion of two sulfur atoms into the C-6 and C-8 positions of the octanoyl moiety bound to the lipoyl domains of lipoate-dependent enzymes, thereby converting the octanoylated domains into lipoylated derivatives. The chain is Lipoyl synthase from Shewanella frigidimarina (strain NCIMB 400).